Here is a 213-residue protein sequence, read N- to C-terminus: Ribosomal RNA large subunit methyltransferase E (213 aa).

The S-adenosyl-L-methionine site is built by G60, W62, D80, D96, and D121. K161 acts as the Proton acceptor in catalysis.

Belongs to the class I-like SAM-binding methyltransferase superfamily. RNA methyltransferase RlmE family.

Its subcellular location is the cytoplasm. It carries out the reaction uridine(2552) in 23S rRNA + S-adenosyl-L-methionine = 2'-O-methyluridine(2552) in 23S rRNA + S-adenosyl-L-homocysteine + H(+). In terms of biological role, specifically methylates the uridine in position 2552 of 23S rRNA at the 2'-O position of the ribose in the fully assembled 50S ribosomal subunit. The polypeptide is Ribosomal RNA large subunit methyltransferase E (Xylella fastidiosa (strain 9a5c)).